We begin with the raw amino-acid sequence, 286 residues long: ATP synthase gamma chain (286 aa).

It belongs to the ATPase gamma chain family. As to quaternary structure, F-type ATPases have 2 components, CF(1) - the catalytic core - and CF(0) - the membrane proton channel. CF(1) has five subunits: alpha(3), beta(3), gamma(1), delta(1), epsilon(1). CF(0) has three main subunits: a, b and c.

The protein localises to the cell membrane. Produces ATP from ADP in the presence of a proton gradient across the membrane. The gamma chain is believed to be important in regulating ATPase activity and the flow of protons through the CF(0) complex. This Ruminococcus albus (strain ATCC 27210 / DSM 20455 / JCM 14654 / NCDO 2250 / 7) protein is ATP synthase gamma chain.